We begin with the raw amino-acid sequence, 125 residues long: UPF0389 protein CG9231 (125 aa).

Residues 69–88 form a helical membrane-spanning segment; that stretch reads IRLANIMIALTAVGCAIMVY. Asparagine 112 carries N-linked (GlcNAc...) asparagine glycosylation.

Belongs to the UPF0389 family.

Its subcellular location is the membrane. The polypeptide is UPF0389 protein CG9231 (Drosophila melanogaster (Fruit fly)).